We begin with the raw amino-acid sequence, 66 residues long: Beta-mammal toxin Co2 (66 aa).

An LCN-type CS-alpha/beta domain is found at 1–66 (KEGYIVNYHD…VWPLPKKRCN (66 aa)). Cystine bridges form between Cys12–Cys65, Cys16–Cys41, Cys25–Cys46, and Cys29–Cys48.

As to expression, expressed by the venom gland.

It localises to the secreted. Its function is as follows. Beta toxins bind voltage-independently at site-4 of sodium channels (Nav) and shift the voltage of activation toward more negative potentials thereby affecting sodium channel activation and promoting spontaneous and repetitive firing. This toxin acts on human Nav1.1/SCN1A, Nav1.2/SCN2A, Nav1.4/SCN4A and Nav1.6/SCN8A voltage-gated sodium channels. Also, it reduces the peak of sodium currents in Nav1.5/SCN5A at all potentials. In vivo, is lethal to mice when intraperitoneally injected at a dose of 5ug. No activity is observed when injected into crickets or woodlice. This chain is Beta-mammal toxin Co2, found in Centruroides ornatus (Scorpion).